The following is a 122-amino-acid chain: Histone H2B, gonadal (122 aa).

Residues 1–31 form a disordered region; sequence MPPKPSGKGQKKAGKAKGAPRTDKKRRRKRK. Position 2 is a n,N-dimethylproline (Pro2). An O-linked (GlcNAc) serine glycan is attached at Ser109. Lys117 participates in a covalent cross-link: Glycyl lysine isopeptide (Lys-Gly) (interchain with G-Cter in ubiquitin).

It belongs to the histone H2B family. As to quaternary structure, the nucleosome is a histone octamer containing two molecules each of H2A, H2B, H3 and H4 assembled in one H3-H4 heterotetramer and two H2A-H2B heterodimers. The octamer wraps approximately 147 bp of DNA. In terms of processing, monoubiquitination of Lys-117 gives a specific tag for epigenetic transcriptional activation and is also prerequisite for histone H3 'Lys-4' and 'Lys-79' methylation. GlcNAcylation at Ser-109 promotes monoubiquitination of Lys-117. It fluctuates in response to extracellular glucose, and associates with transcribed genes.

Its subcellular location is the nucleus. The protein resides in the chromosome. Functionally, core component of nucleosome. Nucleosomes wrap and compact DNA into chromatin, limiting DNA accessibility to the cellular machineries which require DNA as a template. Histones thereby play a central role in transcription regulation, DNA repair, DNA replication and chromosomal stability. DNA accessibility is regulated via a complex set of post-translational modifications of histones, also called histone code, and nucleosome remodeling. The protein is Histone H2B, gonadal of Asterias rubens (Common European starfish).